We begin with the raw amino-acid sequence, 372 residues long: Probable dual-specificity RNA methyltransferase RlmN (372 aa).

The segment at 1-20 is disordered; the sequence is MTSLPLTPVNPDAPARRAAM. Glutamate 112 functions as the Proton acceptor in the catalytic mechanism. One can recognise a Radical SAM core domain in the interval 118–357; the sequence is YPDRVTVCLS…STTVRDTRGR (240 aa). A disulfide bond links cysteine 125 and cysteine 363. [4Fe-4S] cluster is bound by residues cysteine 132, cysteine 136, and cysteine 139. Residues 187–188, serine 221, 244–246, and asparagine 320 each bind S-adenosyl-L-methionine; these read GE and SLH. Cysteine 363 functions as the S-methylcysteine intermediate in the catalytic mechanism.

The protein belongs to the radical SAM superfamily. RlmN family. [4Fe-4S] cluster is required as a cofactor.

Its subcellular location is the cytoplasm. It carries out the reaction adenosine(2503) in 23S rRNA + 2 reduced [2Fe-2S]-[ferredoxin] + 2 S-adenosyl-L-methionine = 2-methyladenosine(2503) in 23S rRNA + 5'-deoxyadenosine + L-methionine + 2 oxidized [2Fe-2S]-[ferredoxin] + S-adenosyl-L-homocysteine. The catalysed reaction is adenosine(37) in tRNA + 2 reduced [2Fe-2S]-[ferredoxin] + 2 S-adenosyl-L-methionine = 2-methyladenosine(37) in tRNA + 5'-deoxyadenosine + L-methionine + 2 oxidized [2Fe-2S]-[ferredoxin] + S-adenosyl-L-homocysteine. Its function is as follows. Specifically methylates position 2 of adenine 2503 in 23S rRNA and position 2 of adenine 37 in tRNAs. In Salinispora tropica (strain ATCC BAA-916 / DSM 44818 / JCM 13857 / NBRC 105044 / CNB-440), this protein is Probable dual-specificity RNA methyltransferase RlmN.